Here is a 200-residue protein sequence, read N- to C-terminus: Ribonuclease HII (200 aa).

One can recognise an RNase H type-2 domain in the interval E6–T200. Residues D12, E13, and D108 each contribute to the a divalent metal cation site.

This sequence belongs to the RNase HII family. Requires Mn(2+) as cofactor. Mg(2+) serves as cofactor.

It localises to the cytoplasm. The catalysed reaction is Endonucleolytic cleavage to 5'-phosphomonoester.. Endonuclease that specifically degrades the RNA of RNA-DNA hybrids. This is Ribonuclease HII from Prochlorococcus marinus (strain MIT 9303).